A 507-amino-acid chain; its full sequence is Probable allantoinase (507 aa).

The Zn(2+) site is built by histidine 105, histidine 107, lysine 195, histidine 231, histidine 294, and aspartate 368. Lysine 195 carries the N6-carboxylysine modification.

It belongs to the metallo-dependent hydrolases superfamily. Allantoinase family. In terms of assembly, homotetramer. Zn(2+) serves as cofactor. In terms of processing, carboxylation allows a single lysine to coordinate two zinc ions.

It catalyses the reaction (S)-allantoin + H2O = allantoate + H(+). It participates in nitrogen metabolism; (S)-allantoin degradation; allantoate from (S)-allantoin: step 1/1. Functionally, catalyzes the conversion of allantoin (5-ureidohydantoin) to allantoate by hydrolytic cleavage of the five-member hydantoin ring. Catalyzes the first step of the ureide allantoin degradation followed by the sequential activity of AAH, UGLYAH and UAH which allows a complete purine breakdown without the intermediate generation of urea. In Oryza sativa subsp. japonica (Rice), this protein is Probable allantoinase (ALN).